Here is a 451-residue protein sequence, read N- to C-terminus: Tubulin alpha-3 chain (451 aa).

Glutamine 11 lines the GTP pocket. N6-acetyllysine is present on lysine 40. 7 residues coordinate GTP: glutamate 71, serine 140, glycine 144, threonine 145, threonine 179, asparagine 206, and asparagine 228. Glutamate 71 serves as a coordination point for Mg(2+). The active site involves glutamate 254.

It belongs to the tubulin family. As to quaternary structure, dimer of alpha and beta chains. A typical microtubule is a hollow water-filled tube with an outer diameter of 25 nm and an inner diameter of 15 nM. Alpha-beta heterodimers associate head-to-tail to form protofilaments running lengthwise along the microtubule wall with the beta-tubulin subunit facing the microtubule plus end conferring a structural polarity. Microtubules usually have 13 protofilaments but different protofilament numbers can be found in some organisms and specialized cells. It depends on Mg(2+) as a cofactor. In terms of processing, undergoes a tyrosination/detyrosination cycle, the cyclic removal and re-addition of a C-terminal tyrosine residue by the enzymes tubulin tyrosine carboxypeptidase (TTCP) and tubulin tyrosine ligase (TTL), respectively. Acetylation of alpha chains at Lys-40 stabilizes microtubules and affects affinity and processivity of microtubule motors. This modification has a role in multiple cellular functions, ranging from cell motility, cell cycle progression or cell differentiation to intracellular trafficking and signaling.

The protein resides in the cytoplasm. It localises to the cytoskeleton. The catalysed reaction is GTP + H2O = GDP + phosphate + H(+). In terms of biological role, tubulin is the major constituent of microtubules, a cylinder consisting of laterally associated linear protofilaments composed of alpha- and beta-tubulin heterodimers. Microtubules grow by the addition of GTP-tubulin dimers to the microtubule end, where a stabilizing cap forms. Below the cap, tubulin dimers are in GDP-bound state, owing to GTPase activity of alpha-tubulin. The chain is Tubulin alpha-3 chain from Homarus americanus (American lobster).